Here is a 170-residue protein sequence, read N- to C-terminus: Small ribosomal subunit protein uS15 (170 aa).

Positions methionine 1–glycine 10 are enriched in basic residues. The interval methionine 1–aspartate 20 is disordered.

The protein belongs to the universal ribosomal protein uS15 family. As to quaternary structure, part of the 30S ribosomal subunit.

The sequence is that of Small ribosomal subunit protein uS15 from Methanothrix thermoacetophila (strain DSM 6194 / JCM 14653 / NBRC 101360 / PT) (Methanosaeta thermophila).